Reading from the N-terminus, the 432-residue chain is Glutamyl-tRNA reductase (432 aa).

Substrate contacts are provided by residues 50–53 (TCNR), S110, 115–117 (ETQ), and Q121. Catalysis depends on C51, which acts as the Nucleophile. NADP(+) is bound at residue 190-195 (GVGEMS).

This sequence belongs to the glutamyl-tRNA reductase family. As to quaternary structure, homodimer.

The catalysed reaction is (S)-4-amino-5-oxopentanoate + tRNA(Glu) + NADP(+) = L-glutamyl-tRNA(Glu) + NADPH + H(+). The protein operates within porphyrin-containing compound metabolism; protoporphyrin-IX biosynthesis; 5-aminolevulinate from L-glutamyl-tRNA(Glu): step 1/2. Functionally, catalyzes the NADPH-dependent reduction of glutamyl-tRNA(Glu) to glutamate 1-semialdehyde (GSA). This is Glutamyl-tRNA reductase from Sulfurimonas denitrificans (strain ATCC 33889 / DSM 1251) (Thiomicrospira denitrificans (strain ATCC 33889 / DSM 1251)).